Reading from the N-terminus, the 218-residue chain is Replication protein RepB (218 aa).

Residues 1 to 26 (MKSESKIDWTVPRPNKNPKTKQPYKR) form a disordered region. Basic residues predominate over residues 16 to 26 (KNPKTKQPYKR).

The protein belongs to the Gram-positive plasmids replication protein type 2 family.

In terms of biological role, is essential for plasmid replication. Nicks the positive strand at the plus origin of replication. The chain is Replication protein RepB (repB) from Lactiplantibacillus plantarum (Lactobacillus plantarum).